A 411-amino-acid chain; its full sequence is LL-diaminopimelate aminotransferase (411 aa).

Substrate is bound by residues tyrosine 15 and glycine 42. Pyridoxal 5'-phosphate-binding positions include tyrosine 72, 108–109 (AK), tyrosine 132, asparagine 187, tyrosine 218, and 246–248 (SFS). Substrate is bound by residues lysine 109, tyrosine 132, and asparagine 187. The residue at position 249 (lysine 249) is an N6-(pyridoxal phosphate)lysine. Pyridoxal 5'-phosphate is bound by residues arginine 257 and asparagine 292. Residues asparagine 292 and arginine 388 each contribute to the substrate site.

The protein belongs to the class-I pyridoxal-phosphate-dependent aminotransferase family. LL-diaminopimelate aminotransferase subfamily. In terms of assembly, homodimer. Pyridoxal 5'-phosphate serves as cofactor.

The enzyme catalyses (2S,6S)-2,6-diaminopimelate + 2-oxoglutarate = (S)-2,3,4,5-tetrahydrodipicolinate + L-glutamate + H2O + H(+). It functions in the pathway amino-acid biosynthesis; L-lysine biosynthesis via DAP pathway; LL-2,6-diaminopimelate from (S)-tetrahydrodipicolinate (aminotransferase route): step 1/1. Its function is as follows. Involved in the synthesis of meso-diaminopimelate (m-DAP or DL-DAP), required for both lysine and peptidoglycan biosynthesis. Catalyzes the direct conversion of tetrahydrodipicolinate to LL-diaminopimelate. The chain is LL-diaminopimelate aminotransferase from Rippkaea orientalis (strain PCC 8801 / RF-1) (Cyanothece sp. (strain PCC 8801)).